We begin with the raw amino-acid sequence, 377 residues long: Opsin-2 (377 aa).

Over 1-57 (MNNQSENYYHGAQFEALKSAGAIEMLGDGLTGDDLAAIPEHWLSYPAPPASAHTALA) the chain is Extracellular. The N-linked (GlcNAc...) asparagine glycan is linked to Asn3. The chain crosses the membrane as a helical span at residues 58-78 (LLYIFFTFAALVGNGMVIFIF). At 79 to 89 (STTKSLRTSSN) the chain is on the cytoplasmic side. Residues 90-110 (FLVLNLAILDFIMMAKAPIFI) traverse the membrane as a helical segment. Residues 111–126 (YNSAMRGFAVGTVGCQ) are Extracellular-facing. Residues Cys125 and Cys202 are joined by a disulfide bond. The helical transmembrane segment at 127–146 (IFALMGAYSGIGAGMTNACI) threads the bilayer. At 147–166 (AYDRHSTITRPLDGRLSEGK) the chain is on the cytoplasmic side. The chain crosses the membrane as a helical span at residues 167 to 187 (VLLMVAFVWIYSTPWALLPLL). At 188–214 (KIWGRYVPEGYLTSCSFDYLTNTFDTK) the chain is on the extracellular side. Residues 215-235 (LFVACIFTCSYVFPMSLIIYF) traverse the membrane as a helical segment. Residues 236-283 (YSGIVKQVFAHEAALREQAKKMNVESLRANQGGSSESAEIRIAKAALT) are Cytoplasmic-facing. A helical transmembrane segment spans residues 284 to 304 (VCFLFVASWTPYGVMALIGAF). Topologically, residues 305 to 314 (GNQQLLTPGV) are extracellular. A helical membrane pass occupies residues 315-335 (TMIPAVACKAVACISPWVYAI). The Cytoplasmic portion of the chain corresponds to 336 to 377 (RHPMYRQELQRRMPWLQIDEPDDTVSTATSNTTNSAPPAATA). Residues 355-377 (EPDDTVSTATSNTTNSAPPAATA) form a disordered region. The span at 361 to 377 (STATSNTTNSAPPAATA) shows a compositional bias: low complexity.

The protein belongs to the G-protein coupled receptor 1 family. Opsin subfamily. In terms of tissue distribution, in the retina, expression is essentially uniformly distributed, but a higher level is seen in the dorsal region of the retina and in the dorsal rim retinulae.

It is found in the membrane. Functionally, visual pigments are the light-absorbing molecules that mediate vision. They consist of an apoprotein, opsin, covalently linked to cis-retinal. May play a role in photoperiodic photoreception. In Manduca sexta (Tobacco hawkmoth), this protein is Opsin-2 (OP2).